We begin with the raw amino-acid sequence, 317 residues long: Polysulfide reductase chain C (317 aa).

8 helical membrane passes run 20–40 (IAVY…AIII), 54–75 (IIKA…LLIF), 98–118 (LGVL…LGVF), 147–167 (IVTF…LSAM), 182–202 (FLAS…LLFF), 221–237 (VILF…VGMY), 259–279 (LFWL…NVAL), and 289–309 (FVML…FYIL).

The protein belongs to the NrfD family. In terms of assembly, functional polysulfide reductase is made up of three different (A, B, and C) subunits.

The protein localises to the cell inner membrane. In terms of biological role, could possibly serve as the membrane anchor of the enzyme. Component of the phosphorylative electron transport system with polysulfide as the terminal acceptor. This chain is Polysulfide reductase chain C (psrC), found in Wolinella succinogenes (strain ATCC 29543 / DSM 1740 / CCUG 13145 / JCM 31913 / LMG 7466 / NCTC 11488 / FDC 602W) (Vibrio succinogenes).